The following is a 547-amino-acid chain: G protein-coupled receptor associated sorting protein 3 (547 aa).

Residues 1-10 are compositionally biased toward basic residues; sequence MAGTKNKTRA. Disordered regions lie at residues 1–32 and 80–102; these read MAGTKNKTRAQAKTEKKAAIQAKAGAEREATG and TLGKAMGDFTPKAGNESTSSTCK.

It belongs to the GPRASP family. Homodimer. Highly expressed in brain. Not expressed in lung or liver. Down-regulated in brain from patients suffering from Alzheimer disease.

The protein localises to the cytoplasm. It localises to the nucleus. Survival and differentiation promoting protein that plays a role in the regulation of neurosynaptogenesis. Induces phosphatase PP2A activity which results in APP dephosphorylation and inhibits BACE1-mediated processing of APP. This Homo sapiens (Human) protein is G protein-coupled receptor associated sorting protein 3.